The primary structure comprises 676 residues: MLKLFSAFRKNKIWDFNGGIHPPEMKTQSNGTPLRQVPLAQRFVIPLKQHIGAEGELCVSVGDKVLRGQPLTRGRGKMLPVHAPTSGTVTAIAPHSTAHPSALAELSVIIDADGEDCWIPRDGWDDYRSRSREELIERIHQFGVAGLGGAGFPTGVKLQGGGDKIETLIINAAECEPYITADDRLMQDCAAQVVEGIRILAHILQPREILIGIEDNKPQAISMLRAVLADSHDISLRVIPTKYPSGGAKQLTYILTGKQVPHGGRSSDIGVLMQNVGTAYAVKRAVIDGEPITERVVTLTGEAIARPGNVWARLGTPVRHLLNDAGFCPSADQMVIMGGPLMGFTLPWLDVPVVKITNCLLAPSANELGEPQEEQNCIRCSACADACPADLLPQQLYWFSKGQQHDKATTHNIADCIECGACAWVCPSNIPLVQYFRQEKAEIAAIRQEEKRAAEAKARFEARQARLEREKAARLERHKSAAVQPAAKDKDAIAAALARVKEKQAQATQPIVIKAGERPDNSAIIAAREARKAQARAKQAELQQTNDAATVADPRKTAVEAAIARAKARKLEQQQANAEPEQQVDPRKAAVEAAIARAKARKLEQQQANAEPEQQVDPRKAAVEAAIARAKARKLEQQQANAEPEEQVDPRKAAVAAAIARVQAKKAAQQKVVNED.

4Fe-4S ferredoxin-type domains lie at 369–397 and 407–436; these read GEPQEEQNCIRCSACADACPADLLPQQLY and KATTHNIADCIECGACAWVCPSNIPLVQYF. The [4Fe-4S] cluster site is built by Cys377, Cys380, Cys383, Cys387, Cys416, Cys419, Cys422, and Cys426. The segment at 600-652 is disordered; the sequence is ARKLEQQQANAEPEQQVDPRKAAVEAAIARAKARKLEQQQANAEPEEQVDPRK. Over residues 605–615 the composition is skewed to low complexity; that stretch reads QQQANAEPEQQ.

The protein belongs to the 4Fe4S bacterial-type ferredoxin family. RnfC subfamily. As to quaternary structure, the complex is composed of six subunits: RsxA, RsxB, RsxC, RsxD, RsxE and RsxG. The cofactor is [4Fe-4S] cluster.

It localises to the cell inner membrane. In terms of biological role, part of a membrane-bound complex that couples electron transfer with translocation of ions across the membrane. Required to maintain the reduced state of SoxR. The polypeptide is Ion-translocating oxidoreductase complex subunit C (Escherichia coli (strain SMS-3-5 / SECEC)).